Reading from the N-terminus, the 264-residue chain is MYQYLDLMRHVLQYGHKKSDRTGTGTLSVFGYQMRFDLQTGFPLVTTKKCHVKSIIHELLWFLRGETNIDYLKRNGVSIWDEWADENGDLGPIYGHQWRSWAASDGTVIDQISQVIQQIKETPDSRRMIVSAWNVGDLDKMKLAPCHVLFQFYVADGRLSCQLYQRSADIFLGVPFNIASYSLLTLMIAQCCDLQPGEFVHTFGDAHLYLNHLEQARLQLEREPRALPAMQLNSTVRNIFDFGYEDFTLHDYDPYPPIKAPVAV.

Arginine 21 is a dUMP binding site. A (6R)-5,10-methylene-5,6,7,8-tetrahydrofolate-binding site is contributed by histidine 51. Arginine 126 to arginine 127 contacts dUMP. Residue cysteine 146 is the Nucleophile of the active site. Residues arginine 166–aspartate 169, asparagine 177, and histidine 207–tyrosine 209 contribute to the dUMP site. Aspartate 169 lines the (6R)-5,10-methylene-5,6,7,8-tetrahydrofolate pocket. Alanine 263 serves as a coordination point for (6R)-5,10-methylene-5,6,7,8-tetrahydrofolate.

It belongs to the thymidylate synthase family. Bacterial-type ThyA subfamily. Homodimer.

The protein localises to the cytoplasm. It catalyses the reaction dUMP + (6R)-5,10-methylene-5,6,7,8-tetrahydrofolate = 7,8-dihydrofolate + dTMP. It participates in pyrimidine metabolism; dTTP biosynthesis. Catalyzes the reductive methylation of 2'-deoxyuridine-5'-monophosphate (dUMP) to 2'-deoxythymidine-5'-monophosphate (dTMP) while utilizing 5,10-methylenetetrahydrofolate (mTHF) as the methyl donor and reductant in the reaction, yielding dihydrofolate (DHF) as a by-product. This enzymatic reaction provides an intracellular de novo source of dTMP, an essential precursor for DNA biosynthesis. This Nitrosomonas europaea (strain ATCC 19718 / CIP 103999 / KCTC 2705 / NBRC 14298) protein is Thymidylate synthase.